The chain runs to 367 residues: Probable butyrate kinase (367 aa).

It belongs to the acetokinase family.

It is found in the cytoplasm. It catalyses the reaction butanoate + ATP = butanoyl phosphate + ADP. This is Probable butyrate kinase from Bacillus cereus (strain ATCC 14579 / DSM 31 / CCUG 7414 / JCM 2152 / NBRC 15305 / NCIMB 9373 / NCTC 2599 / NRRL B-3711).